A 336-amino-acid chain; its full sequence is Phospholipase A1 (336 aa).

The N-terminal stretch at 1-27 (MEENMNLKYLLLFVYFVQVLNCCYGHG) is a signal peptide. A propeptide spanning residues 28–36 (DPLSYELDR) is cleaved from the precursor. A disulfide bridge connects residues Cys40 and Cys123. The active-site Nucleophile is Ser173. The Charge relay system role is filled by Asp201. Intrachain disulfides connect Cys212–Cys217 and Cys255–Cys263. Catalysis depends on His265, which acts as the Charge relay system. 3 cysteine pairs are disulfide-bonded: Cys280-Cys304, Cys281-Cys329, and Cys297-Cys302.

The protein belongs to the AB hydrolase superfamily. Lipase family. Expressed by the venom gland.

Its subcellular location is the secreted. It carries out the reaction a 1,2-diacyl-sn-glycero-3-phosphocholine + H2O = a 2-acyl-sn-glycero-3-phosphocholine + a fatty acid + H(+). Functionally, catalyzes the hydrolysis of phosphatidylcholine with phospholipase A1 activity. Induces hemolytic activity. Acts as an allergen. This chain is Phospholipase A1, found in Vespula vulgaris (Yellow jacket).